Reading from the N-terminus, the 115-residue chain is Cycloviolacin-O13 (115 aa).

A signal peptide spans 1 to 22; sequence MDAKKMFVALVLIATFALPSLA. Positions 23–81 are excised as a propeptide; that stretch reads TFEKDFITPETIQAILKKSAPLSNIMLEEDVINALLKSKTVISNPIIEEAFLKNSNGLN. The segment at residues 82–111 is a cross-link (cyclopeptide (Gly-Asn)); it reads GIPCGESCVWIPCISAAIGCSCKSKVCYRN. 3 cysteine pairs are disulfide-bonded: cysteine 85-cysteine 101, cysteine 89-cysteine 103, and cysteine 94-cysteine 108. Positions 112-115 are excised as a propeptide; it reads SLDN.

Cycloviolacin-O13 is a cyclic peptide. In terms of tissue distribution, expressed in leaves, petals, petioles, roots and runners (at protein level).

Its function is as follows. Probably participates in a plant defense mechanism. Has hemolytic activity. The sequence is that of Cycloviolacin-O13 from Viola odorata (Sweet violet).